The sequence spans 72 residues: Cytochrome c oxidase copper chaperone 2 (72 aa).

Cu cation is bound by residues Cys32 and Cys33. In terms of domain architecture, CHCH spans Cys32–Val72. 2 short sequence motifs (cx9C motif) span residues Cys35–Cys45 and Cys54–Cys64. 2 disulfides stabilise this stretch: Cys35-Cys64 and Cys45-Cys54.

The protein belongs to the COX17 family.

The protein localises to the mitochondrion intermembrane space. Copper chaperone for cytochrome c oxidase (COX). Binds 2 copper ions and delivers them to the Cu(A) site of COX. This chain is Cytochrome c oxidase copper chaperone 2 (COX17-2), found in Arabidopsis thaliana (Mouse-ear cress).